A 79-amino-acid chain; its full sequence is DNA gyrase inhibitor YacG (79 aa).

Positions 7, 10, 26, and 30 each coordinate Zn(2+).

Belongs to the DNA gyrase inhibitor YacG family. Interacts with GyrB. Requires Zn(2+) as cofactor.

Functionally, inhibits all the catalytic activities of DNA gyrase by preventing its interaction with DNA. Acts by binding directly to the C-terminal domain of GyrB, which probably disrupts DNA binding by the gyrase. This Shewanella halifaxensis (strain HAW-EB4) protein is DNA gyrase inhibitor YacG.